We begin with the raw amino-acid sequence, 98 residues long: NADH-ubiquinone oxidoreductase chain 4L (98 aa).

Helical transmembrane passes span 1-21 (MTPIQFTFSSAFLLGLSGLAF), 26-46 (LLSALLCLEGMMLSLFIALSL), and 59-79 (APMLLLAFSACEASVGLALMV).

Belongs to the complex I subunit 4L family.

Its subcellular location is the mitochondrion membrane. It carries out the reaction a ubiquinone + NADH + 5 H(+)(in) = a ubiquinol + NAD(+) + 4 H(+)(out). Its function is as follows. Core subunit of the mitochondrial membrane respiratory chain NADH dehydrogenase (Complex I) which catalyzes electron transfer from NADH through the respiratory chain, using ubiquinone as an electron acceptor. Part of the enzyme membrane arm which is embedded in the lipid bilayer and involved in proton translocation. The chain is NADH-ubiquinone oxidoreductase chain 4L (MT-ND4L) from Tetraodon nigroviridis (Spotted green pufferfish).